A 65-amino-acid polypeptide reads, in one-letter code: Small ribosomal subunit protein eS27 (65 aa).

The Zn(2+) site is built by cysteine 20, cysteine 23, cysteine 39, and cysteine 42. The C4-type zinc-finger motif lies at 20-42 (CIDCGNEQIVFSHPATRVRCLVC).

The protein belongs to the eukaryotic ribosomal protein eS27 family. In terms of assembly, part of the 30S ribosomal subunit. The cofactor is Zn(2+).

The polypeptide is Small ribosomal subunit protein eS27 (Pyrococcus horikoshii (strain ATCC 700860 / DSM 12428 / JCM 9974 / NBRC 100139 / OT-3)).